We begin with the raw amino-acid sequence, 338 residues long: Probable dual-specificity RNA methyltransferase RlmN (338 aa).

Glutamate 89 (proton acceptor) is an active-site residue. The Radical SAM core domain occupies 95-325 (HNYGMSACVT…AILRKEQGHD (231 aa)). A disulfide bridge connects residues cysteine 102 and cysteine 330. Positions 109, 113, and 116 each coordinate [4Fe-4S] cluster. Residues 156–157 (GE), serine 188, 211–213 (SLH), and asparagine 287 contribute to the S-adenosyl-L-methionine site. The active-site S-methylcysteine intermediate is cysteine 330.

Belongs to the radical SAM superfamily. RlmN family. [4Fe-4S] cluster is required as a cofactor.

The protein resides in the cytoplasm. The enzyme catalyses adenosine(2503) in 23S rRNA + 2 reduced [2Fe-2S]-[ferredoxin] + 2 S-adenosyl-L-methionine = 2-methyladenosine(2503) in 23S rRNA + 5'-deoxyadenosine + L-methionine + 2 oxidized [2Fe-2S]-[ferredoxin] + S-adenosyl-L-homocysteine. The catalysed reaction is adenosine(37) in tRNA + 2 reduced [2Fe-2S]-[ferredoxin] + 2 S-adenosyl-L-methionine = 2-methyladenosine(37) in tRNA + 5'-deoxyadenosine + L-methionine + 2 oxidized [2Fe-2S]-[ferredoxin] + S-adenosyl-L-homocysteine. In terms of biological role, specifically methylates position 2 of adenine 2503 in 23S rRNA and position 2 of adenine 37 in tRNAs. The chain is Probable dual-specificity RNA methyltransferase RlmN from Acholeplasma laidlawii (strain PG-8A).